Here is a 418-residue protein sequence, read N- to C-terminus: Putative ion-transport protein YfeO (418 aa).

A run of 12 helical transmembrane segments spans residues 10 to 30, 54 to 74, 99 to 119, 120 to 140, 149 to 169, 186 to 206, 223 to 243, 258 to 278, 300 to 320, 322 to 342, 343 to 363, and 371 to 391; these read LLLSLPAVAIGIASSLILIVV, DSPLWIIGVLTLTGIAVGLVI, ALPGLIVALILGLAGGVSLGP, EHPIMTVNIALAVAIGARLLP, ILASAGTIGALFGTPVAAALI, LFAPLMAAAAGALTTGLFFHP, ILSGAIVAAIAIAAGMVAVWC, VLVLGIGGFILGILGVIGGPV, DYFLLAVIKLAALVVAAASGF, GGRIFPAVFVGVALGLMLHEH, VPAVPAAITVSCAILGIVLVV, and LFMAAVVVPNTTLLPLLCIVM.

It belongs to the chloride channel (TC 2.A.49) family.

Its subcellular location is the cell membrane. The chain is Putative ion-transport protein YfeO from Shigella boydii serotype 18 (strain CDC 3083-94 / BS512).